The following is a 453-amino-acid chain: MAQKLEAIGRGLQWDDSSDHDNVTKILVRGGREGIQYVKFDYVKSGQPQTGLIHGLSGRGGFTQTFEIDQKDEHLVSVEGYYDVTKGVIQALKFKTNKKTSEMIGYDDTGIKLSLEVKGKKIIGFHGYAETNLNSLGAYFTTTGPIGLNPQVGHIKLAYQGGGGGIPWDHGPNHNGVKRVSFIFDENEIRQWRVDYDDGGVIRQYEPINGYDMFEVKEYPTEYIISVECTYDDVIPRSGRRMIRSIMFKTSKGRVSPIFGYPAARKFVLENNGGALIGFHGRVGAGIDALGAYFSSFIPSPPPPSPEKLQPEGGEAVGDPWDDGIFNGVREIHLEDGEGIALKFVYDKDVQVTELKVHGEPSGIGFNEFKLDYPSEYITTVEGFWDKTSGNERGVITRLRFTTNKQTFRPVGLESTTSFSLGKEGYKIVGFHGNSSTDKLHQLGVYVVPITRE.

3 consecutive Jacalin-type lectin domains span residues 1–142, 154–296, and 306–449; these read MAQK…YFTT, HIKL…YFSS, and PEKL…YVVP. Position 2 is an N-acetylalanine (alanine 2).

Belongs to the jacalin lectin family. Expressed in roots.

This is Jacalin-related lectin 40 (JAL40) from Arabidopsis thaliana (Mouse-ear cress).